Consider the following 310-residue polypeptide: Methionyl-tRNA formyltransferase (310 aa).

109–112 is a binding site for (6S)-5,6,7,8-tetrahydrofolate; the sequence is SLLP.

It belongs to the Fmt family.

The catalysed reaction is L-methionyl-tRNA(fMet) + (6R)-10-formyltetrahydrofolate = N-formyl-L-methionyl-tRNA(fMet) + (6S)-5,6,7,8-tetrahydrofolate + H(+). Its function is as follows. Attaches a formyl group to the free amino group of methionyl-tRNA(fMet). The formyl group appears to play a dual role in the initiator identity of N-formylmethionyl-tRNA by promoting its recognition by IF2 and preventing the misappropriation of this tRNA by the elongation apparatus. The polypeptide is Methionyl-tRNA formyltransferase (Alkaliphilus oremlandii (strain OhILAs) (Clostridium oremlandii (strain OhILAs))).